A 256-amino-acid chain; its full sequence is tRNA (guanine-N(7)-)-methyltransferase (256 aa).

4 residues coordinate S-adenosyl-L-methionine: glutamate 85, glutamate 110, aspartate 137, and aspartate 159. Aspartate 159 is a catalytic residue. The substrate site is built by lysine 163 and aspartate 195.

Belongs to the class I-like SAM-binding methyltransferase superfamily. TrmB family.

The catalysed reaction is guanosine(46) in tRNA + S-adenosyl-L-methionine = N(7)-methylguanosine(46) in tRNA + S-adenosyl-L-homocysteine. It functions in the pathway tRNA modification; N(7)-methylguanine-tRNA biosynthesis. Catalyzes the formation of N(7)-methylguanine at position 46 (m7G46) in tRNA. The polypeptide is tRNA (guanine-N(7)-)-methyltransferase (Rhodopseudomonas palustris (strain HaA2)).